Here is a 361-residue protein sequence, read N- to C-terminus: Probable mannose-1-phosphate guanylyltransferase 2 (361 aa).

Residues Leu6 and Val7 each coordinate GDP-alpha-D-mannose. Residues Gly9, Gly11, Thr12, Arg13, and Lys23 each contribute to the diphosphate site. GDP-alpha-D-mannose-binding residues include Gly85, Asn109, Asp111, Gly146, and Asn173.

The protein belongs to the transferase hexapeptide repeat family.

It catalyses the reaction alpha-D-mannose 1-phosphate + GTP + H(+) = GDP-alpha-D-mannose + diphosphate. The protein operates within nucleotide-sugar biosynthesis; GDP-alpha-D-mannose biosynthesis; GDP-alpha-D-mannose from alpha-D-mannose 1-phosphate (GTP route): step 1/1. Catalyzes a reaction of the Smirnoff-Wheeler pathway, the major route to ascorbate biosynthesis in plants. This is Probable mannose-1-phosphate guanylyltransferase 2 from Oryza sativa subsp. japonica (Rice).